The sequence spans 226 residues: Enolase-phosphatase E1 (226 aa).

It belongs to the HAD-like hydrolase superfamily. MasA/MtnC family. Monomer. The cofactor is Mg(2+).

It carries out the reaction 5-methylsulfanyl-2,3-dioxopentyl phosphate + H2O = 1,2-dihydroxy-5-(methylsulfanyl)pent-1-en-3-one + phosphate. It participates in amino-acid biosynthesis; L-methionine biosynthesis via salvage pathway; L-methionine from S-methyl-5-thio-alpha-D-ribose 1-phosphate: step 3/6. Its pathway is amino-acid biosynthesis; L-methionine biosynthesis via salvage pathway; L-methionine from S-methyl-5-thio-alpha-D-ribose 1-phosphate: step 4/6. In terms of biological role, bifunctional enzyme that catalyzes the enolization of 2,3-diketo-5-methylthiopentyl-1-phosphate (DK-MTP-1-P) into the intermediate 2-hydroxy-3-keto-5-methylthiopentenyl-1-phosphate (HK-MTPenyl-1-P), which is then dephosphorylated to form the acireductone 1,2-dihydroxy-3-keto-5-methylthiopentene (DHK-MTPene). This Shewanella sp. (strain W3-18-1) protein is Enolase-phosphatase E1.